Reading from the N-terminus, the 327-residue chain is WRKY transcription factor WRKY76 (327 aa).

A coiled-coil region spans residues 56–76; it reads AKIVEAKVTQMSEENRRLTEV. The segment at 87–135 is disordered; it reads RLGLDGSASPPRPVSPLSGKKRSRESMETANSCDANSNRHQGGDADHAE. The Nuclear localization signal signature appears at 106-112; it reads KKRSRES. The segment covering 114 to 126 has biased composition (polar residues); sequence ETANSCDANSNRH. Positions 160 to 226 form a DNA-binding region, WRKY; the sequence is DTSLVVKDGY…YEGEHNHPHP (67 aa).

The protein belongs to the WRKY group II-a family.

It localises to the nucleus. Its function is as follows. Transcription repressor. Interacts specifically with the W box (5'-(T)TGAC[CT]-3'), a frequently occurring elicitor-responsive cis-acting element. Regulates, probably indirectly, the activation of defense-related genes during defense response. Modulates plant innate immunity against X.oryzae pv. oryzae (Xoo). In Oryza sativa subsp. japonica (Rice), this protein is WRKY transcription factor WRKY76.